Reading from the N-terminus, the 306-residue chain is GTPase Era (306 aa).

Residues 14–181 (KSGFIGIIGR…LDELWKYLPE (168 aa)) form the Era-type G domain. The G1 stretch occupies residues 22–29 (GRPNVGKS). 22–29 (GRPNVGKS) contributes to the GTP binding site. The G2 stretch occupies residues 48-52 (QTTRN). The segment at 69-72 (DTPG) is G3. Residues 69-73 (DTPGI) and 131-134 (NKID) contribute to the GTP site. The interval 131-134 (NKID) is G4. The interval 160-162 (ISA) is G5. One can recognise a KH type-2 domain in the interval 212 to 290 (THKEIPYSSA…FLELFVRVRK (79 aa)).

The protein belongs to the TRAFAC class TrmE-Era-EngA-EngB-Septin-like GTPase superfamily. Era GTPase family. Monomer.

It localises to the cytoplasm. The protein resides in the cell inner membrane. In terms of biological role, an essential GTPase that binds both GDP and GTP, with rapid nucleotide exchange. Plays a role in 16S rRNA processing and 30S ribosomal subunit biogenesis and possibly also in cell cycle regulation and energy metabolism. The sequence is that of GTPase Era from Syntrophus aciditrophicus (strain SB).